Consider the following 193-residue polypeptide: ATP-dependent protease subunit HslV (193 aa).

The active site involves T12. Na(+) is bound by residues A167, C170, and T173.

This sequence belongs to the peptidase T1B family. HslV subfamily. As to quaternary structure, a double ring-shaped homohexamer of HslV is capped on each side by a ring-shaped HslU homohexamer. The assembly of the HslU/HslV complex is dependent on binding of ATP.

It localises to the cytoplasm. The catalysed reaction is ATP-dependent cleavage of peptide bonds with broad specificity.. With respect to regulation, allosterically activated by HslU binding. Its function is as follows. Protease subunit of a proteasome-like degradation complex believed to be a general protein degrading machinery. This Bartonella quintana (strain Toulouse) (Rochalimaea quintana) protein is ATP-dependent protease subunit HslV.